The following is a 256-amino-acid chain: Protein YIPF7 (256 aa).

Topologically, residues 1 to 125 (MSNLAQFDSD…VDGSIMNETD (125 aa)) are cytoplasmic. Polar residues-rich tracts occupy residues 18–31 (IDNQ…SNAY) and 38–48 (RKQQAGEQPQP). The segment at 18–48 (IDNQEQSGNDSNAYGNLYGSRKQQAGEQPQP) is disordered. The helical transmembrane segment at 126-146 (LTGPILFCVALGATLLLAGKV) threads the bilayer. Position 147 (Gln-147) is a topological domain, extracellular. A helical transmembrane segment spans residues 148-168 (FGYVYGMSAIGCLVIHALLNL). The Cytoplasmic portion of the chain corresponds to 169-172 (MSSS). The chain crosses the membrane as a helical span at residues 173–193 (GVSYGCVASVLGYCLLPMVIL). At 194-196 (SGC) the chain is on the extracellular side. A helical membrane pass occupies residues 197–217 (AMFFSLQGIFGIMSSLVIIGW). The Cytoplasmic portion of the chain corresponds to 218-235 (CSLSASKIFIAALHMEGQ). The chain crosses the membrane as a helical span at residues 236–256 (QLLVAYPCAILYGLFALLTIF).

This sequence belongs to the YIP1 family.

The protein resides in the endoplasmic reticulum membrane. The protein localises to the golgi apparatus. It is found in the cis-Golgi network membrane. Its subcellular location is the trans-Golgi network membrane. The polypeptide is Protein YIPF7 (YIPF7) (Homo sapiens (Human)).